The chain runs to 189 residues: Glucose-6-phosphate isomerase (189 aa).

H88, H90, E97, and H136 together coordinate Fe cation.

Belongs to the archaeal-type GPI family. In terms of assembly, homodimer. Requires Fe cation as cofactor.

It is found in the cytoplasm. The enzyme catalyses alpha-D-glucose 6-phosphate = beta-D-fructose 6-phosphate. It participates in carbohydrate degradation; glycolysis; D-glyceraldehyde 3-phosphate and glycerone phosphate from D-glucose: step 2/4. The polypeptide is Glucose-6-phosphate isomerase (pgiA) (Pyrococcus abyssi (strain GE5 / Orsay)).